A 102-amino-acid chain; its full sequence is NADH-quinone oxidoreductase subunit K (102 aa).

3 helical membrane-spanning segments follow: residues 6–26, 30–50, and 62–82; these read LEHG…GLMV, ILFV…AFVV, and VMFI…LAIL.

The protein belongs to the complex I subunit 4L family. As to quaternary structure, NDH-1 is composed of 13 different subunits. Subunits NuoA, H, J, K, L, M, N constitute the membrane sector of the complex.

The protein localises to the cell inner membrane. The enzyme catalyses a quinone + NADH + 5 H(+)(in) = a quinol + NAD(+) + 4 H(+)(out). Its function is as follows. NDH-1 shuttles electrons from NADH, via FMN and iron-sulfur (Fe-S) centers, to quinones in the respiratory chain. The immediate electron acceptor for the enzyme in this species is believed to be ubiquinone. Couples the redox reaction to proton translocation (for every two electrons transferred, four hydrogen ions are translocated across the cytoplasmic membrane), and thus conserves the redox energy in a proton gradient. The polypeptide is NADH-quinone oxidoreductase subunit K (Pseudomonas putida (strain ATCC 700007 / DSM 6899 / JCM 31910 / BCRC 17059 / LMG 24140 / F1)).